The primary structure comprises 115 residues: T cell receptor beta variable 18 (115 aa).

The N-terminal stretch at methionine 1 to alanine 21 is a signal peptide. An Ig-like domain is found at glycine 22 to proline 115. Cysteine 42 and cysteine 111 form a disulfide bridge.

In terms of assembly, alpha-beta TR is a heterodimer composed of an alpha and beta chain; disulfide-linked. The alpha-beta TR is associated with the transmembrane signaling CD3 coreceptor proteins to form the TR-CD3 (TcR or TCR). The assembly of alpha-beta TR heterodimers with CD3 occurs in the endoplasmic reticulum where a single alpha-beta TR heterodimer associates with one CD3D-CD3E heterodimer, one CD3G-CD3E heterodimer and one CD247 homodimer forming a stable octameric structure. CD3D-CD3E and CD3G-CD3E heterodimers preferentially associate with TR alpha and TR beta chains, respectively. The association of the CD247 homodimer is the last step of TcR assembly in the endoplasmic reticulum and is required for transport to the cell surface.

The protein resides in the cell membrane. V region of the variable domain of T cell receptor (TR) beta chain that participates in the antigen recognition. Alpha-beta T cell receptors are antigen specific receptors which are essential to the immune response and are present on the cell surface of T lymphocytes. Recognize peptide-major histocompatibility (MH) (pMH) complexes that are displayed by antigen presenting cells (APC), a prerequisite for efficient T cell adaptive immunity against pathogens. Binding of alpha-beta TR to pMH complex initiates TR-CD3 clustering on the cell surface and intracellular activation of LCK that phosphorylates the ITAM motifs of CD3G, CD3D, CD3E and CD247 enabling the recruitment of ZAP70. In turn ZAP70 phosphorylates LAT, which recruits numerous signaling molecules to form the LAT signalosome. The LAT signalosome propagates signal branching to three major signaling pathways, the calcium, the mitogen-activated protein kinase (MAPK) kinase and the nuclear factor NF-kappa-B (NF-kB) pathways, leading to the mobilization of transcription factors that are critical for gene expression and essential for T cell growth and differentiation. The T cell repertoire is generated in the thymus, by V-(D)-J rearrangement. This repertoire is then shaped by intrathymic selection events to generate a peripheral T cell pool of self-MH restricted, non-autoaggressive T cells. Post-thymic interaction of alpha-beta TR with the pMH complexes shapes TR structural and functional avidity. This chain is T cell receptor beta variable 18, found in Homo sapiens (Human).